The primary structure comprises 827 residues: MSSKQATSPFACTVDGEETMTQDLTSREKEEGSDQHPASHLPLHPIMHNKPHSEELPTLVSTIQQDADWDSVLSSQQRMESENNKLCSLYSFRNTSTSPHKPDEGSREREIMNSVTFGTPERRKGSLADVVDTLKQKKLEEMTRTEQEDSSCMEKLLSKDWKEKMERLNTSELLGEIKGTPESLAEKERQLSTMITQLISLREQLLAAHDEQKKLAASQIEKQRQQMDLARQQQEQIARQQQQLLQQQHKINLLQQQIQVQGHMPPLMIPIFPHDQRTLAAAAAAQQGFLFPPGITYKPGDNYPVQFIPSTMAAAAASGLSPLQLQKGHVSHPQINPRLKGISDRLGRNLDPYEHGGGHSYNHKQIEQLYAAQLASMQVSPGAKMPSTPQPPNSAGAVSPTGIKNEKRGTSPVTQVKDETTAQPLNLSSRPKTAEPVKSPTSPTQSLFPASKTSPVNLPNKSSIPSPIGGSLGRGSSLDILSSLNSPALFGDQDTVMKAIQEARKMREQIQREQQQQPHGVDGKLSSMNSMGLSNCRNEKERTRFENLGPQLTGKSSEDGKLGPGVIDLTRPEDAEGSKAMNGSAAKLQQYYCWPTGGATVAEARVYRDARGRASSEPHIKRPMNAFMVWAKDERRKILQAFPDMHNSNISKILGSRWKSMSNQEKQPYYEEQARLSKIHLEKYPNYKYKPRPKRTCIVDGKKLRIGEYKQLMRSRRQEMRQFFTVGQQPQIPITTGTGVVYPGAITMATTTPSPQMTSDCSSTSASPEPSLPVIQSTYGMKMDGASLAGNDMINGEDEMEAYDDYEDDPKSDYSSENEAPEPVSAN.

Polar residues predominate over residues 1-10 (MSSKQATSPF). The segment at 1–51 (MSSKQATSPFACTVDGEETMTQDLTSREKEEGSDQHPASHLPLHPIMHNKP) is disordered. Residues 25–34 (TSREKEEGSD) are compositionally biased toward basic and acidic residues. Residue threonine 119 is modified to Phosphothreonine. A coiled-coil region spans residues 184-257 (LAEKERQLST…QHKINLLQQQ (74 aa)). 2 disordered regions span residues 329-360 (HVSHPQINPRLKGISDRLGRNLDPYEHGGGHS) and 380-470 (SPGA…PIGG). A compositionally biased stretch (basic and acidic residues) spans 341 to 357 (GISDRLGRNLDPYEHGG). Residue serine 399 is modified to Phosphoserine. Threonine 401 carries the post-translational modification Phosphothreonine. Glycyl lysine isopeptide (Lys-Gly) (interchain with G-Cter in SUMO) cross-links involve residues lysine 404 and lysine 417. 2 stretches are compositionally biased toward polar residues: residues 421–431 (TAQPLNLSSRP) and 439–461 (SPTSPTQSLFPASKTSPVNLPNK). A phosphoserine mark is found at serine 439 and serine 442. Residues 620-688 (IKRPMNAFMV…IHLEKYPNYK (69 aa)) constitute a DNA-binding region (HMG box). 2 disordered regions span residues 752 to 772 (TPSPQMTSDCSSTSASPEPSL) and 786 to 827 (ASLA…VSAN). Residues 795-808 (NGEDEMEAYDDYED) show a composition bias toward acidic residues.

Homodimer. Interacts with DAZAP2. May interact with CENPK. Sumoylation inhibits the transcriptional activity.

The protein localises to the nucleus. It localises to the cytoplasm. Functionally, transcription factor that plays a key role in several developmental processes, including neurogenesis, chondrocytes differentiation and cartilage formation. Specifically binds the 5'-AACAAT-3' DNA motif present in enhancers and super-enhancers and promotes expression of genes important for chondrogenesis. Required for overt chondrogenesis when condensed prechondrocytes differentiate into early stage chondrocytes: SOX5 and SOX6 cooperatively bind with SOX9 on active enhancers and super-enhancers associated with cartilage-specific genes, and thereby potentiate SOX9's ability to transactivate. Not involved in precartilaginous condensation, the first step in chondrogenesis, during which skeletal progenitors differentiate into prechondrocytes. Together with SOX5, required to form and maintain a pool of highly proliferating chondroblasts between epiphyses and metaphyses, to form columnar chondroblasts, delay chondrocyte prehypertrophy but promote hypertrophy, and to delay terminal differentiation of chondrocytes on contact with ossification fronts. Binds to the proximal promoter region of the myelin protein MPZ gene, and is thereby involved in the differentiation of oligodendroglia in the developing spinal tube. Binds to the gene promoter of MBP and acts as a transcriptional repressor. This chain is Transcription factor SOX-6, found in Rattus norvegicus (Rat).